We begin with the raw amino-acid sequence, 566 residues long: Intracellular exo-alpha-(1-&gt;5)-L-arabinofuranosidase (566 aa).

Polar residues predominate over residues 1 to 12 (MTTHNSQYSAET). The segment at 1–39 (MTTHNSQYSAETTHPDKQESSPAPTAAGTTASNVSTTGN) is disordered. The span at 20 to 32 (SSPAPTAAGTTAS) shows a compositional bias: low complexity. The alpha-L-arabinofuranose site is built by glutamate 69, asparagine 114, and asparagine 214. Glutamate 215 acts as the Proton donor/acceptor in catalysis. Alpha-L-arabinofuranose-binding residues include tyrosine 286, glutamate 340, and glutamine 409. The active-site Nucleophile is the glutamate 340.

It belongs to the glycosyl hydrolase 51 family. Homohexamer; trimer of dimers.

The protein localises to the cytoplasm. The catalysed reaction is Hydrolysis of terminal non-reducing alpha-L-arabinofuranoside residues in alpha-L-arabinosides.. The protein operates within glycan metabolism; L-arabinan degradation. Its activity is regulated as follows. Completely inhibited by Hg(2+) and Cu(2+) ions, whereas 1 mM Zn(2+) inhibited activity by 51%. Involved in the degradation of arabinan and is a key enzyme in the complete degradation of the plant cell wall. Catalyzes the cleavage of terminal alpha-(1-&gt;5)-arabinofuranosyl bonds in different hemicellulosic homopolysaccharides (branched and debranched arabinans). It is active with sugar beet arabinan and wheat arabinoxylan. It also exhibited activity against alpha-(1-&gt;5)-linked arabinobiose, arabinotriose, arabinotetraose, and arabinopentaose. In Bifidobacterium longum, this protein is Intracellular exo-alpha-(1-&gt;5)-L-arabinofuranosidase (abfB).